The sequence spans 101 residues: Protein Tat (101 aa).

The segment at 1 to 24 (MEPVDPNLEPWKHPGSQPRTACTN) is interaction with human CREBBP. Positions 1–48 (MEPVDPNLEPWKHPGSQPRTACTNCYCKKCCFHCQVCFITKGLGISYG) are transactivation. Zn(2+) contacts are provided by Cys-22, Cys-25, and Cys-27. The interval 22–37 (CTNCYCKKCCFHCQVC) is cysteine-rich. Lys-28 carries the N6-acetyllysine; by host PCAF modification. Cys-30, His-33, Cys-34, and Cys-37 together coordinate Zn(2+). The tract at residues 38–48 (FITKGLGISYG) is core. A disordered region spans residues 48–101 (GRKKRRQRQRAPDSSQNHQDSLSKQPSSQPRGDPTGPKESKKEVERETETDPLD). The short motif at 49 to 57 (RKKRRQRQR) is the Nuclear localization signal, RNA-binding (TAR), and protein transduction element. Residues 49 to 86 (RKKRRQRQRAPDSSQNHQDSLSKQPSSQPRGDPTGPKE) form an interaction with the host capping enzyme RNGTT region. 2 positions are modified to N6-acetyllysine; by host EP300 and GCN5L2: Lys-50 and Lys-51. An asymmetric dimethylarginine; by host PRMT6 mark is found at Arg-52 and Arg-53. Residues 59–77 (PDSSQNHQDSLSKQPSSQP) show a composition bias toward polar residues. A Glycyl lysine isopeptide (Lys-Gly) (interchain with G-Cter in ubiquitin) cross-link involves residue Lys-71. Residues 78–80 (RGD) carry the Cell attachment site motif. The span at 83 to 101 (GPKESKKEVERETETDPLD) shows a compositional bias: basic and acidic residues.

The protein belongs to the lentiviruses Tat family. Interacts with host CCNT1. Associates with the P-TEFb complex composed at least of Tat, P-TEFb (CDK9 and CCNT1), TAR RNA, RNA Pol II. Recruits the HATs CREBBP, TAF1/TFIID, EP300, PCAF and GCN5L2. Interacts with host KAT5/Tip60; this interaction targets the latter to degradation. Interacts with the host deacetylase SIRT1. Interacts with host capping enzyme RNGTT; this interaction stimulates RNGTT. Binds to host KDR, and to the host integrins ITGAV/ITGB3 and ITGA5/ITGB1. Interacts with host KPNB1/importin beta-1 without previous binding to KPNA1/importin alpha-1. Interacts with EIF2AK2. Interacts with host nucleosome assembly protein NAP1L1; this interaction may be required for the transport of Tat within the nucleus, since the two proteins interact at the nuclear rim. Interacts with host C1QBP/SF2P32; this interaction involves lysine-acetylated Tat. Interacts with the host chemokine receptors CCR2, CCR3 and CXCR4. Interacts with host DPP4/CD26; this interaction may trigger an anti-proliferative effect. Interacts with host LDLR. Interacts with the host extracellular matrix metalloproteinase MMP1. Interacts with host PRMT6; this interaction mediates Tat's methylation. Interacts with, and is ubiquitinated by MDM2/Hdm2. Interacts with host PSMC3 and HTATIP2. Interacts with STAB1; this interaction may overcome SATB1-mediated repression of IL2 and IL2RA (interleukin) in T cells by binding to the same domain than HDAC1. Interacts (when acetylated) with human CDK13, thereby increasing HIV-1 mRNA splicing and promoting the production of the doubly spliced HIV-1 protein Nef. Interacts with host TBP; this interaction modulates the activity of transcriptional pre-initiation complex. Interacts with host RELA. Interacts with host PLSCR1; this interaction negatively regulates Tat transactivation activity by altering its subcellular distribution. Post-translationally, asymmetrical arginine methylation by host PRMT6 seems to diminish the transactivation capacity of Tat and affects the interaction with host CCNT1. In terms of processing, acetylation by EP300, CREBBP, GCN5L2/GCN5 and PCAF regulates the transactivation activity of Tat. EP300-mediated acetylation of Lys-50 promotes dissociation of Tat from the TAR RNA through the competitive binding to PCAF's bromodomain. In addition, the non-acetylated Tat's N-terminus can also interact with PCAF. PCAF-mediated acetylation of Lys-28 enhances Tat's binding to CCNT1. Lys-50 is deacetylated by SIRT1. Polyubiquitination by host MDM2 does not target Tat to degradation, but activates its transactivation function and fosters interaction with CCNT1 and TAR RNA. Post-translationally, phosphorylated by EIF2AK2 on serine and threonine residues adjacent to the basic region important for TAR RNA binding and function. Phosphorylation of Tat by EIF2AK2 is dependent on the prior activation of EIF2AK2 by dsRNA.

It is found in the host nucleus. Its subcellular location is the host nucleolus. It localises to the host cytoplasm. The protein resides in the secreted. Transcriptional activator that increases RNA Pol II processivity, thereby increasing the level of full-length viral transcripts. Recognizes a hairpin structure at the 5'-LTR of the nascent viral mRNAs referred to as the transactivation responsive RNA element (TAR) and recruits the cyclin T1-CDK9 complex (P-TEFb complex) that will in turn hyperphosphorylate the RNA polymerase II to allow efficient elongation. The CDK9 component of P-TEFb and other Tat-activated kinases hyperphosphorylate the C-terminus of RNA Pol II that becomes stabilized and much more processive. Other factors such as HTATSF1/Tat-SF1, SUPT5H/SPT5, and HTATIP2 are also important for Tat's function. Besides its effect on RNA Pol II processivity, Tat induces chromatin remodeling of proviral genes by recruiting the histone acetyltransferases (HATs) CREBBP, EP300 and PCAF to the chromatin. This also contributes to the increase in proviral transcription rate, especially when the provirus integrates in transcriptionally silent region of the host genome. To ensure maximal activation of the LTR, Tat mediates nuclear translocation of NF-kappa-B by interacting with host RELA. Through its interaction with host TBP, Tat may also modulate transcription initiation. Tat can reactivate a latently infected cell by penetrating in it and transactivating its LTR promoter. In the cytoplasm, Tat is thought to act as a translational activator of HIV-1 mRNAs. Its function is as follows. Extracellular circulating Tat can be endocytosed by surrounding uninfected cells via the binding to several surface receptors such as CD26, CXCR4, heparan sulfate proteoglycans (HSPG) or LDLR. Neurons are rarely infected, but they internalize Tat via their LDLR. Through its interaction with nuclear HATs, Tat is potentially able to control the acetylation-dependent cellular gene expression. Modulates the expression of many cellular genes involved in cell survival, proliferation or in coding for cytokines or cytokine receptors. Tat plays a role in T-cell and neurons apoptosis. Tat induced neurotoxicity and apoptosis probably contribute to neuroAIDS. Circulating Tat also acts as a chemokine-like and/or growth factor-like molecule that binds to specific receptors on the surface of the cells, affecting many cellular pathways. In the vascular system, Tat binds to ITGAV/ITGB3 and ITGA5/ITGB1 integrins dimers at the surface of endothelial cells and competes with bFGF for heparin-binding sites, leading to an excess of soluble bFGF. The protein is Protein Tat of Human immunodeficiency virus type 1 group M subtype B (isolate SF33) (HIV-1).